The sequence spans 776 residues: LPS-assembly protein LptD (776 aa).

The signal sequence occupies residues 1 to 24 (MQHFSRTFLAASIATALFAPYAQA).

This sequence belongs to the LptD family. As to quaternary structure, component of the lipopolysaccharide transport and assembly complex. Interacts with LptE and LptA.

It localises to the cell outer membrane. In terms of biological role, together with LptE, is involved in the assembly of lipopolysaccharide (LPS) at the surface of the outer membrane. In Vibrio vulnificus (strain CMCP6), this protein is LPS-assembly protein LptD.